We begin with the raw amino-acid sequence, 484 residues long: uncharacterized protein (484 aa).

Residues 334-484 (IIIRQITDND…ENEWIYEVNL (151 aa)) form the N-acetyltransferase domain.

This is an uncharacterized protein from Methanocaldococcus jannaschii (strain ATCC 43067 / DSM 2661 / JAL-1 / JCM 10045 / NBRC 100440) (Methanococcus jannaschii).